An 86-amino-acid chain; its full sequence is Putative defensin-like protein 244 (86 aa).

A signal peptide spans 1–22 (MKGIAMLLVSCLLFSFLSTNLA). 4 cysteine pairs are disulfide-bonded: Cys-28–Cys-83, Cys-38–Cys-67, Cys-48–Cys-77, and Cys-65–Cys-79.

This sequence belongs to the DEFL family.

Its subcellular location is the secreted. This Arabidopsis thaliana (Mouse-ear cress) protein is Putative defensin-like protein 244 (SCRL11).